Here is a 245-residue protein sequence, read N- to C-terminus: Uridylate kinase (245 aa).

20–23 (KVSG) provides a ligand contact to ATP. Glycine 62 is a UMP binding site. ATP contacts are provided by glycine 63 and arginine 67. Residues aspartate 81 and 142–149 (IGSPFFTT) contribute to the UMP site. Residues threonine 169, glutamine 170, tyrosine 175, and aspartate 178 each coordinate ATP.

It belongs to the UMP kinase family. In terms of assembly, homohexamer.

The protein localises to the cytoplasm. It carries out the reaction UMP + ATP = UDP + ADP. It functions in the pathway pyrimidine metabolism; CTP biosynthesis via de novo pathway; UDP from UMP (UMPK route): step 1/1. With respect to regulation, inhibited by UTP. Functionally, catalyzes the reversible phosphorylation of UMP to UDP. The polypeptide is Uridylate kinase (Anaplasma marginale (strain St. Maries)).